The sequence spans 361 residues: Histidinol-phosphate aminotransferase (361 aa).

Lys-219 is modified (N6-(pyridoxal phosphate)lysine).

Belongs to the class-II pyridoxal-phosphate-dependent aminotransferase family. Histidinol-phosphate aminotransferase subfamily. As to quaternary structure, homodimer. The cofactor is pyridoxal 5'-phosphate.

It carries out the reaction L-histidinol phosphate + 2-oxoglutarate = 3-(imidazol-4-yl)-2-oxopropyl phosphate + L-glutamate. It functions in the pathway amino-acid biosynthesis; L-histidine biosynthesis; L-histidine from 5-phospho-alpha-D-ribose 1-diphosphate: step 7/9. The chain is Histidinol-phosphate aminotransferase from Cereibacter sphaeroides (strain KD131 / KCTC 12085) (Rhodobacter sphaeroides).